The chain runs to 445 residues: 3-phosphoshikimate 1-carboxyvinyltransferase (445 aa).

Positions 34, 35, and 39 each coordinate 3-phosphoshikimate. Lysine 34 serves as a coordination point for phosphoenolpyruvate. Residues glycine 112 and arginine 140 each contribute to the phosphoenolpyruvate site. 3-phosphoshikimate-binding residues include serine 186, serine 187, glutamine 188, serine 216, glutamate 331, and histidine 358. Glutamine 188 is a phosphoenolpyruvate binding site. The Proton acceptor role is filled by glutamate 331. 3 residues coordinate phosphoenolpyruvate: arginine 362, arginine 403, and lysine 428.

It belongs to the EPSP synthase family. As to quaternary structure, monomer.

It is found in the cytoplasm. It carries out the reaction 3-phosphoshikimate + phosphoenolpyruvate = 5-O-(1-carboxyvinyl)-3-phosphoshikimate + phosphate. Its pathway is metabolic intermediate biosynthesis; chorismate biosynthesis; chorismate from D-erythrose 4-phosphate and phosphoenolpyruvate: step 6/7. Catalyzes the transfer of the enolpyruvyl moiety of phosphoenolpyruvate (PEP) to the 5-hydroxyl of shikimate-3-phosphate (S3P) to produce enolpyruvyl shikimate-3-phosphate and inorganic phosphate. This chain is 3-phosphoshikimate 1-carboxyvinyltransferase, found in Kocuria rhizophila (strain ATCC 9341 / DSM 348 / NBRC 103217 / DC2201).